Reading from the N-terminus, the 597-residue chain is MGIHAKLETVQLPLLVSCLFPPLTMPAKDVQICPIAVDTTVFRSRTWDRLKFEIEYGLQRGTTANSYLISADKIALFDPPGESFTDNFVGTLIQRLDLNSLDYVILGHVNANRAHTLKLLLSLAPQATIICSNPAAQNLEKLLADAEVNNPIQVMKGNDHLDLGRGHELTFIPTPSPRYPGQLCTYDPRTEILFTDKLFGAHVCGDQVFDEGWTIYQEDRRYYFDCLLAPAAAQVSAALNKLEAYPAQTYAPSHGPLVRYGLRELTRNYQQWLSEQQAQALNVALIYASAYGNTSTLAQAIARGITKAGVAVTAINAETSNAEEIKEAIGKSAGFIFGSPTLGGHAPTPIQTALGITLANASKTQLCGVFGSFGWSGEAIDMLENKFRDAGFSFGFDTIRVKFKPTDQTLKMCEEAGTDFAQALKKAEKRRQPKSALPESESARTEQALGRLVGSLCVVTAQQGELSSAMLASWVSQATFSPPGLTVAVAKERAIESLLHKNSCFVLNILQEGNHLGLMKHFLKPFAPGGDRFADVATETAENGAPILTESLAYLECRVQQRLECGDHWVLYAVTDRGALLKDGVTAVHHRKSGDHY.

Residues 59–254 (QRGTTANSYL…YPAQTYAPSH (196 aa)) are zinc metallo-hydrolase. Residues 283–421 (VALIYASAYG…MCEEAGTDFA (139 aa)) enclose the Flavodoxin-like domain. The tract at residues 449–597 (LGRLVGSLCV…VHHRKSGDHY (149 aa)) is flavodoxin-reductase-like.

The protein in the N-terminal section; belongs to the zinc metallo-hydrolase group 3 family. In the C-terminal section; belongs to the flavodoxin reductase family. Fe cation serves as cofactor.

Its function is as follows. Mediates electron transfer from NADH to oxygen, reducing it to water. This modular protein has 3 redox cofactors, in other organisms the same activity requires 2 or 3 proteins. The chain is Putative diflavin flavoprotein A 3 (dfa3) from Synechocystis sp. (strain ATCC 27184 / PCC 6803 / Kazusa).